Here is a 91-residue protein sequence, read N- to C-terminus: Small ribosomal subunit protein bS20 (91 aa).

Belongs to the bacterial ribosomal protein bS20 family.

Binds directly to 16S ribosomal RNA. This is Small ribosomal subunit protein bS20 from Wolinella succinogenes (strain ATCC 29543 / DSM 1740 / CCUG 13145 / JCM 31913 / LMG 7466 / NCTC 11488 / FDC 602W) (Vibrio succinogenes).